The chain runs to 298 residues: Myozenin-1 (298 aa).

The tract at residues 1–34 (MPLSGTPAPNKKRKSSKLIMELTGGGQESSGLNL) is disordered. Phosphoserine is present on serine 82. The tract at residues 105–173 (FSYSKGSSGG…TGTGDQAGGE (69 aa)) is disordered. Residues 118–129 (GSSSAGQYGSGQ) show a composition bias toward low complexity. Residues 136-172 (SGSGSGGAGGPGSQTGRGGDAGTTGVGETGTGDQAGG) are compositionally biased toward gly residues.

This sequence belongs to the myozenin family. As to quaternary structure, interacts with ACTN2, ACTN3, FLNA, FLNB, FLNC, LDB3, PPP3CA and TCAP. Interacts via its C-terminal region with MYOT.

The protein localises to the nucleus. It localises to the cell projection. It is found in the pseudopodium. In terms of biological role, myozenins may serve as intracellular binding proteins involved in linking Z-disk proteins such as alpha-actinin, gamma-filamin, TCAP/telethonin, LDB3/ZASP and localizing calcineurin signaling to the sarcomere. Plays an important role in the modulation of calcineurin signaling. May play a role in myofibrillogenesis. The polypeptide is Myozenin-1 (MYOZ1) (Sus scrofa (Pig)).